We begin with the raw amino-acid sequence, 39 residues long: Potassium channel toxin alpha-KTx 2.1 (39 aa).

3 disulfides stabilise this stretch: cysteine 7–cysteine 29, cysteine 13–cysteine 34, and cysteine 17–cysteine 36. The tract at residues 26-34 (GAKCMNGKC) is interaction with Ca(2+)-activated K(+) channels. At asparagine 39 the chain carries Asparagine amide.

Belongs to the short scorpion toxin superfamily. Potassium channel inhibitor family. Alpha-KTx 02 subfamily. As to expression, expressed by the venom gland.

It localises to the secreted. Blocks voltage-gated potassium channels (mKv1.1/KCNA1 (Kd&gt;25 nM), rKv1.2/KCNA2 (Kd=2 nM), mKv1.3/KCNA3 (Kd=1 nM), hKv1.5/KCNA5 (Kd&gt;25 nM) and mKv3.1/KCNC1 (Kd&gt;25 nM)) and calcium-activated potassium channels (KCa1.1/KCNMA1 and KCa3.1/KCNN4, Kd&gt;25 nM). The sequence is that of Potassium channel toxin alpha-KTx 2.1 from Centruroides noxius (Mexican scorpion).